Reading from the N-terminus, the 102-residue chain is DET1- and DDB1-associated protein 1 (102 aa).

The interval 67–102 is disordered; sequence NAAKKRDQEQVEIEGENSAPPRKIARTDSQDMNEDT.

This sequence belongs to the DDA1 family. Component of numerous DCX (DDB1-CUL4-X-box) E3 ubiquitin-protein ligase complexes which consist of a core of DDB1, cullin-4 (CUL4A or CUL4B), DDA1 and RBX1.

It participates in protein modification; protein ubiquitination. Its function is as follows. Functions as a component of numerous distinct DCX (DDB1-CUL4-X-box) E3 ubiquitin-protein ligase complexes which mediate the ubiquitination and subsequent proteasomal degradation of target proteins. In the DCX complexes, acts as a scaffolding subunit required to stabilize the complex. The protein is DET1- and DDB1-associated protein 1 of Gallus gallus (Chicken).